Consider the following 267-residue polypeptide: NAD kinase 2 (267 aa).

Residue aspartate 52 is the Proton acceptor of the active site. NAD(+) contacts are provided by residues 52–53 (DA), 124–125 (NE), arginine 151, aspartate 153, 164–169 (TAYNKS), and alanine 188.

It belongs to the NAD kinase family. Requires a divalent metal cation as cofactor.

Its subcellular location is the cytoplasm. It carries out the reaction NAD(+) + ATP = ADP + NADP(+) + H(+). Involved in the regulation of the intracellular balance of NAD and NADP, and is a key enzyme in the biosynthesis of NADP. Catalyzes specifically the phosphorylation on 2'-hydroxyl of the adenosine moiety of NAD to yield NADP. This chain is NAD kinase 2, found in Bacillus cereus (strain ATCC 14579 / DSM 31 / CCUG 7414 / JCM 2152 / NBRC 15305 / NCIMB 9373 / NCTC 2599 / NRRL B-3711).